Here is a 2258-residue protein sequence, read N- to C-terminus: Probable serine/threonine-protein kinase ifkA (2258 aa).

Disordered stretches follow at residues 43 to 108 (RVNS…HQMG) and 189 to 308 (EMNN…KEND). Over residues 45-57 (NSSDDINNNNNNN) the composition is skewed to low complexity. The segment covering 58 to 100 (NDDDDDNDDYDDSDDENSDSDYDDYDDSDDENSDDEFYSDDED) has biased composition (acidic residues). Residues 191–301 (NNLTNSNNSN…NKELIDNNNN (111 aa)) show a composition bias toward low complexity. Residues 273-309 (NNNNNISNNKINKINNNNNNKELIDNNNNNKDKENDL) adopt a coiled-coil conformation. One can recognise a Protein kinase 1 domain in the interval 319 to 691 (WKKGSCIERK…AGILLKHPFL (373 aa)). ATP is bound by residues 325–333 (IERKSNYSV) and Lys-348. Residues 358–398 (SSSSLTSLSNSNNNNSNNNNNNNNNNNNNNNNNNNNNNNNN) are disordered. A compositionally biased stretch (low complexity) spans 359–398 (SSSLTSLSNSNNNNSNNNNNNNNNNNNNNNNNNNNNNNNN). Catalysis depends on Asp-498, which acts as the Proton acceptor. 2 disordered regions span residues 741–768 (KSQTPNNNNDNNNLASSNELLSSSNGSN) and 782–870 (PLAT…MTPL). Residues 746 to 768 (NNNNDNNNLASSNELLSSSNGSN) are compositionally biased toward low complexity. The span at 782 to 791 (PLATSSSLDN) shows a compositional bias: polar residues. The segment covering 793 to 805 (TPPPSRPISPKPS) has biased composition (pro residues). The span at 841–870 (PQQNFNTPPTTTTTTTTPTATPTTPTMTPL) shows a compositional bias: low complexity. A Protein kinase 2 domain is found at 894–1482 (FEEIEMIGKG…TKQLLESGLL (589 aa)). ATP-binding positions include 900–908 (IGKGGFGVV) and Lys-923. Over residues 1053–1094 (TLSSSNTSSSSSLLSNNKSKILNTSKSTSTNTSTSTSTSNTN) the composition is skewed to low complexity. The disordered stretch occupies residues 1053–1259 (TLSSSNTSSS…SSSRKKPPKE (207 aa)). Positions 1095–1106 (KNKKISKKKKSK) are enriched in basic residues. The segment covering 1156–1185 (NNNNNNDNNNNYHSDNESDSFSGSISMSDG) has biased composition (low complexity). The span at 1206–1233 (DENENDDDDEEDDDDEYDEEDDDYETFD) shows a compositional bias: acidic residues. Residues 1242–1251 (SNNSKLSTSS) show a composition bias toward low complexity. The active-site Proton acceptor is the Asp-1313. Disordered stretches follow at residues 1343–1370 (KSDDLNSSTSNTANNINLSSSTNSTAQQ) and 2048–2104 (GSGG…QQTS). A compositionally biased stretch (low complexity) spans 1347 to 1368 (LNSSTSNTANNINLSSSTNSTA). The span at 2048–2072 (GSGGSGGSGGGSSMSSGGGGGGNSN) shows a compositional bias: gly residues. Positions 2085 to 2099 (SNQSTSSSGNSNNSN) are enriched in low complexity.

Belongs to the protein kinase superfamily. Ser/Thr protein kinase family.

The enzyme catalyses L-seryl-[protein] + ATP = O-phospho-L-seryl-[protein] + ADP + H(+). The catalysed reaction is L-threonyl-[protein] + ATP = O-phospho-L-threonyl-[protein] + ADP + H(+). Functionally, phosphorylates eIF2-alpha, from 1 to 7 hours after the onset of development or during the preaggregation state, resulting in a shift from polysomes to free ribosomes for bulk mRNA. The chain is Probable serine/threonine-protein kinase ifkA (ifkA) from Dictyostelium discoideum (Social amoeba).